A 531-amino-acid chain; its full sequence is Probable protein phosphatase 2C 66 (531 aa).

A disordered region spans residues 1–47; the sequence is MGSCLSSDLPPRAGAGAGASPGWPQRWRRRRQRGVERGGAVSGGGGG. The segment covering 10–25 has biased composition (low complexity); sequence PPRAGAGAGASPGWPQ. In terms of domain architecture, PPM-type phosphatase spans 88 to 401; that stretch reads AACLHTQQGR…DDCAVVCLFL (314 aa). 2 residues coordinate Mn(2+): D123 and G124. Positions 151-172 are enriched in polar residues; that stretch reads SANEDTSSHQNGSISGSVNSEE. Residues 151-176 form a disordered region; sequence SANEDTSSHQNGSISGSVNSEESPVV. Mn(2+)-binding residues include D346 and D392.

This sequence belongs to the PP2C family. It depends on Mg(2+) as a cofactor. Mn(2+) serves as cofactor.

It carries out the reaction O-phospho-L-seryl-[protein] + H2O = L-seryl-[protein] + phosphate. The catalysed reaction is O-phospho-L-threonyl-[protein] + H2O = L-threonyl-[protein] + phosphate. The protein is Probable protein phosphatase 2C 66 of Oryza sativa subsp. japonica (Rice).